Consider the following 37-residue polypeptide: Large ribosomal subunit protein bL36 (37 aa).

The protein belongs to the bacterial ribosomal protein bL36 family.

This chain is Large ribosomal subunit protein bL36, found in Caldanaerobacter subterraneus subsp. tengcongensis (strain DSM 15242 / JCM 11007 / NBRC 100824 / MB4) (Thermoanaerobacter tengcongensis).